The sequence spans 391 residues: Multidrug resistance protein MdtL (391 aa).

The next 12 helical transmembrane spans lie at phenylalanine 4 to valine 24, isoleucine 42 to alanine 62, proline 69 to glutamate 89, leucine 93 to phenylalanine 113, glycine 134 to phenylalanine 154, serine 158 to leucine 178, phenylalanine 203 to valine 222, alanine 245 to phenylalanine 265, threonine 269 to proline 289, valine 293 to methionine 313, leucine 331 to isoleucine 351, and methionine 356 to alanine 376.

The protein belongs to the major facilitator superfamily. DHA1 family. MdtL (TC 2.A.1.2.22) subfamily.

The protein resides in the cell inner membrane. Functionally, confers resistance to chloramphenicol. This Escherichia coli O81 (strain ED1a) protein is Multidrug resistance protein MdtL.